We begin with the raw amino-acid sequence, 534 residues long: Paired box protein Pax-1 (534 aa).

Positions 98–224 (TYGEVNQLGG…SSISRILRNK (127 aa)) form a DNA-binding region, paired. Residues 101-157 (EVNQLGGVFVNGRPLPNAIRLRIVELAQLGIRPCDISRQLRVSHGCVSKILARYNET) are PAI subdomain. The RED subdomain stretch occupies residues 176–224 (NVVKHIRDYKQGDPGIFAWEIRDRLLADGVCDKYNVPSVSSISRILRNK). 2 disordered regions span residues 424–480 (PSRE…AAAP) and 492–511 (EEEA…QAQP).

The protein resides in the nucleus. This protein is a transcriptional activator. It may play a role in the formation of segmented structures of the embryo. May play an important role in the normal development of the vertebral column. This chain is Paired box protein Pax-1 (PAX1), found in Homo sapiens (Human).